The primary structure comprises 298 residues: Ribosomal RNA small subunit methyltransferase H (298 aa).

S-adenosyl-L-methionine is bound by residues 37–39 (GGH), D57, L91, D105, and Q112.

Belongs to the methyltransferase superfamily. RsmH family.

It localises to the cytoplasm. The enzyme catalyses cytidine(1402) in 16S rRNA + S-adenosyl-L-methionine = N(4)-methylcytidine(1402) in 16S rRNA + S-adenosyl-L-homocysteine + H(+). Functionally, specifically methylates the N4 position of cytidine in position 1402 (C1402) of 16S rRNA. The sequence is that of Ribosomal RNA small subunit methyltransferase H from Kosmotoga olearia (strain ATCC BAA-1733 / DSM 21960 / TBF 19.5.1).